The primary structure comprises 249 residues: MNLLLMGGTKDSVEIGKKLRDLGDLFILYTSTTDYGGKLGEEFANKVITKPLDKNELKEVIKKYNIDILVDATHPFAINASKNAIEVCKELNIKYVRFERKEEKINHPNIIYVKDFEEAARLAKKANKVFHMAGIKNLKMVVDIVGKDKVIARVLPISVSEALKILPQKQIVAMYGTFSKELNKYLIRDYNCDVIITKDSGESGGFKEKVYGALEAEAKVIVVERPKIDYPVCFDDIDELIKYIANLKI.

This sequence belongs to the precorrin-6x reductase family.

It catalyses the reaction Co-precorrin-6B + NAD(+) = Co-precorrin-6A + NADH + H(+). It functions in the pathway cofactor biosynthesis; adenosylcobalamin biosynthesis; cob(II)yrinate a,c-diamide from sirohydrochlorin (anaerobic route): step 7/10. In terms of biological role, catalyzes the reduction of the macrocycle of cobalt-precorrin-6A to cobalt-precorrin-6B. This is Cobalt-precorrin-6A reductase (cbiJ) from Methanocaldococcus jannaschii (strain ATCC 43067 / DSM 2661 / JAL-1 / JCM 10045 / NBRC 100440) (Methanococcus jannaschii).